The primary structure comprises 253 residues: Probable transcriptional regulatory protein syc0529_d (253 aa).

Belongs to the TACO1 family.

The protein localises to the cytoplasm. The polypeptide is Probable transcriptional regulatory protein syc0529_d (Synechococcus sp. (strain ATCC 27144 / PCC 6301 / SAUG 1402/1) (Anacystis nidulans)).